Here is a 495-residue protein sequence, read N- to C-terminus: Sugar phosphate exchanger 3 (495 aa).

A helical membrane pass occupies residues 16 to 36 (FSHHHMVVFLLTFFSYSLLHA). Asn-58 is a glycosylation site (N-linked (GlcNAc...) asparagine). 5 helical membrane-spanning segments follow: residues 82 to 102 (TLFL…GLFI), 114 to 134 (WVLS…GTLT), 148 to 168 (LWIV…AVMG), 178 to 198 (VVFG…ACLA), and 210 to 230 (FLVT…GLLV). Asn-267 carries an N-linked (GlcNAc...) asparagine glycan. The next 6 helical transmembrane spans lie at 298–318 (LAYA…PFYL), 334–354 (IWYD…SDML), 358–378 (APVL…YSRS), 387–407 (LLMA…SSAI), 429–449 (GIVD…VSLI), and 453–473 (LGWM…VLFI).

Belongs to the major facilitator superfamily. Organophosphate:Pi antiporter (OPA) (TC 2.A.1.4) family. As to quaternary structure, interacts with ATRAID; the interaction is direct and both proteins are mutually dependent for their stability. In terms of processing, glycosylated.

It is found in the endoplasmic reticulum membrane. The protein localises to the lysosome membrane. Unlike the other SLC37 members, lacks glucose-6-phosphate antiporter activity. In osteoclasts, forms a transporter complex with ATRAID for nitrogen-containing-bisphophonates (N-BPs) required for releasing N-BP molecules that have trafficked to lysosomes through fluid-phase endocytosis into the cytosol. In Bos taurus (Bovine), this protein is Sugar phosphate exchanger 3 (SLC37A3).